The primary structure comprises 306 residues: Ribosomal protein L11 methyltransferase (306 aa).

S-adenosyl-L-methionine contacts are provided by Thr154, Gly179, Asp201, and Asn242.

It belongs to the methyltransferase superfamily. PrmA family.

The protein resides in the cytoplasm. It catalyses the reaction L-lysyl-[protein] + 3 S-adenosyl-L-methionine = N(6),N(6),N(6)-trimethyl-L-lysyl-[protein] + 3 S-adenosyl-L-homocysteine + 3 H(+). In terms of biological role, methylates ribosomal protein L11. The sequence is that of Ribosomal protein L11 methyltransferase from Stenotrophomonas maltophilia (strain R551-3).